The following is a 591-amino-acid chain: MLRSHAAGSLRSSDAGQQVTLAGWVARRRDHGGVIFIDLRDASGITQVVFRDPDVLKQAHRLRAEFCVAVTGLVEIRPEGNANPEIATGDIEVNASSLTVLGESAPLPFQLDEPAGEELRLKYRYLDLRRDAPASAIRLRSKVNAAAREVLDRHDFVEIETPTITRSTPEGARDFLVPARLHPGSFYALPQSPQLFKQLLMVAGMERYYQIARCYRDEDFRADRQPEFTQLDMEMSFVDAEDVIAISEEILAALWALIGYDIPRPIPRISYADAMARYGSDKPDLRFGLELVECSEFFKDTTFRVFQAPYVGAVVMPGGASQPRRTLDGWQEWAKQRGAKGLAYVLVGEDGELGGPVAKNLSEAERAGLAGHVGAAPGDCIFFAAGPAKPSRALLGAARSEIAHRLGLIDPQAWAFVWVVDPPLFEPADDATAAGDVAVGSGAWTAVHHAFTAPKPGYEDAIETDTGNVLADAYDIVCNGNEIGGGSIRIHRRDIQERVFAVMGLDHAEAQEKFGFLLEAFTFGAPPHGGIAFGWDRINALLSRVDSIREVIAFPKTGGGVDPLTDAPAPITEQQRKESGIDVKPEPSKPH.

Residue Glu170 participates in L-aspartate binding. An aspartate region spans residues Gln194–Lys197. L-aspartate is bound at residue Arg216. Residues Arg216–Glu218 and Gln225 contribute to the ATP site. His448 serves as a coordination point for L-aspartate. Glu482 contacts ATP. Arg489 contacts L-aspartate. Gly534–Arg537 serves as a coordination point for ATP. The interval Gly559 to His591 is disordered. The span at Gln574 to His591 shows a compositional bias: basic and acidic residues.

Belongs to the class-II aminoacyl-tRNA synthetase family. Type 1 subfamily. Homodimer.

Its subcellular location is the cytoplasm. It catalyses the reaction tRNA(Asx) + L-aspartate + ATP = L-aspartyl-tRNA(Asx) + AMP + diphosphate. Aspartyl-tRNA synthetase with relaxed tRNA specificity since it is able to aspartylate not only its cognate tRNA(Asp) but also tRNA(Asn). Reaction proceeds in two steps: L-aspartate is first activated by ATP to form Asp-AMP and then transferred to the acceptor end of tRNA(Asp/Asn). This is Aspartate--tRNA(Asp/Asn) ligase from Mycolicibacterium paratuberculosis (strain ATCC BAA-968 / K-10) (Mycobacterium paratuberculosis).